The chain runs to 362 residues: Anthranilate phosphoribosyltransferase 2 (362 aa).

Residues glycine 103, 106–107 (GD), threonine 111, 113–116 (NIST), 131–139 (KHGNRSASS), and serine 143 contribute to the 5-phospho-alpha-D-ribose 1-diphosphate site. Anthranilate is bound at residue glycine 103. Position 115 (serine 115) interacts with Mg(2+). Asparagine 134 serves as a coordination point for anthranilate. An anthranilate-binding site is contributed by arginine 189. Residues aspartate 248 and glutamate 249 each coordinate Mg(2+).

This sequence belongs to the anthranilate phosphoribosyltransferase family. Homodimer. The cofactor is Mg(2+).

The catalysed reaction is N-(5-phospho-beta-D-ribosyl)anthranilate + diphosphate = 5-phospho-alpha-D-ribose 1-diphosphate + anthranilate. Its pathway is amino-acid biosynthesis; L-tryptophan biosynthesis; L-tryptophan from chorismate: step 2/5. Functionally, catalyzes the transfer of the phosphoribosyl group of 5-phosphorylribose-1-pyrophosphate (PRPP) to anthranilate to yield N-(5'-phosphoribosyl)-anthranilate (PRA). The sequence is that of Anthranilate phosphoribosyltransferase 2 from Nostoc sp. (strain PCC 7120 / SAG 25.82 / UTEX 2576).